A 440-amino-acid chain; its full sequence is Xylose isomerase (440 aa).

Residues His-101 and Asp-104 contribute to the active site. Residues Glu-232, Glu-268, His-271, Asp-296, Asp-307, Asp-309, and Asp-339 each contribute to the Mg(2+) site.

This sequence belongs to the xylose isomerase family. Homotetramer. The cofactor is Mg(2+).

Its subcellular location is the cytoplasm. The enzyme catalyses alpha-D-xylose = alpha-D-xylulofuranose. This Enterobacter sp. (strain 638) protein is Xylose isomerase.